The sequence spans 283 residues: Aspartate dehydrogenase domain-containing protein (283 aa).

Phosphoserine is present on residues serine 20 and serine 168.

This sequence belongs to the L-aspartate dehydrogenase family.

This chain is Aspartate dehydrogenase domain-containing protein, found in Homo sapiens (Human).